A 951-amino-acid polypeptide reads, in one-letter code: 2-oxoglutarate dehydrogenase E1 component (951 aa).

The tract at residues 906-925 (RRRRSSPAEGNPTAHKQEQA) is disordered.

Belongs to the alpha-ketoglutarate dehydrogenase family. As to quaternary structure, homodimer. Part of the 2-oxoglutarate dehydrogenase (OGDH) complex composed of E1 (2-oxoglutarate dehydrogenase), E2 (dihydrolipoamide succinyltransferase) and E3 (dihydrolipoamide dehydrogenase); the complex contains multiple copies of the three enzymatic components (E1, E2 and E3). It depends on thiamine diphosphate as a cofactor.

It carries out the reaction N(6)-[(R)-lipoyl]-L-lysyl-[protein] + 2-oxoglutarate + H(+) = N(6)-[(R)-S(8)-succinyldihydrolipoyl]-L-lysyl-[protein] + CO2. In terms of biological role, E1 component of the 2-oxoglutarate dehydrogenase (OGDH) complex which catalyzes the decarboxylation of 2-oxoglutarate, the first step in the conversion of 2-oxoglutarate to succinyl-CoA and CO(2). This Exiguobacterium sp. (strain ATCC BAA-1283 / AT1b) protein is 2-oxoglutarate dehydrogenase E1 component.